Here is a 424-residue protein sequence, read N- to C-terminus: Serine--tRNA ligase (424 aa).

Residue 233 to 235 participates in L-serine binding; sequence TAE. Position 264–266 (264–266) interacts with ATP; it reads RKE. An L-serine-binding site is contributed by glutamate 287. 351–354 contributes to the ATP binding site; sequence EISS. Residue serine 386 coordinates L-serine.

The protein belongs to the class-II aminoacyl-tRNA synthetase family. Type-1 seryl-tRNA synthetase subfamily. Homodimer. The tRNA molecule binds across the dimer.

It is found in the cytoplasm. The enzyme catalyses tRNA(Ser) + L-serine + ATP = L-seryl-tRNA(Ser) + AMP + diphosphate + H(+). It carries out the reaction tRNA(Sec) + L-serine + ATP = L-seryl-tRNA(Sec) + AMP + diphosphate + H(+). It functions in the pathway aminoacyl-tRNA biosynthesis; selenocysteinyl-tRNA(Sec) biosynthesis; L-seryl-tRNA(Sec) from L-serine and tRNA(Sec): step 1/1. In terms of biological role, catalyzes the attachment of serine to tRNA(Ser). Is also able to aminoacylate tRNA(Sec) with serine, to form the misacylated tRNA L-seryl-tRNA(Sec), which will be further converted into selenocysteinyl-tRNA(Sec). This chain is Serine--tRNA ligase, found in Elusimicrobium minutum (strain Pei191).